The following is a 497-amino-acid chain: Putative glucuronosyltransferase PGSIP8 (497 aa).

The helical transmembrane segment at 3-23 (LQRGFVFLSLVLSFMIIETTA) threads the bilayer. Positions 165 and 167 each coordinate Mn(2+). A run of 5 helical transmembrane segments spans residues 319-339 (YSAE…IIVV), 365-385 (GFKL…FFTI), 388-408 (TIHP…LSSI), 418-438 (LPVL…AFPW), and 442-462 (GVVR…FVWV).

It belongs to the glycosyltransferase 8 family. Glycogenin subfamily. Mn(2+) serves as cofactor.

It localises to the membrane. The polypeptide is Putative glucuronosyltransferase PGSIP8 (PGSIP8) (Arabidopsis thaliana (Mouse-ear cress)).